The primary structure comprises 940 residues: Isoleucine--tRNA ligase (940 aa).

Positions proline 58–histidine 68 match the 'HIGH' region motif. Glutamate 564 serves as a coordination point for L-isoleucyl-5'-AMP. Positions lysine 605 to serine 609 match the 'KMSKS' region motif. An ATP-binding site is contributed by lysine 608. Residues cysteine 903, cysteine 906, cysteine 923, and cysteine 926 each coordinate Zn(2+).

Belongs to the class-I aminoacyl-tRNA synthetase family. IleS type 1 subfamily. Monomer. The cofactor is Zn(2+).

It is found in the cytoplasm. It catalyses the reaction tRNA(Ile) + L-isoleucine + ATP = L-isoleucyl-tRNA(Ile) + AMP + diphosphate. Its function is as follows. Catalyzes the attachment of isoleucine to tRNA(Ile). As IleRS can inadvertently accommodate and process structurally similar amino acids such as valine, to avoid such errors it has two additional distinct tRNA(Ile)-dependent editing activities. One activity is designated as 'pretransfer' editing and involves the hydrolysis of activated Val-AMP. The other activity is designated 'posttransfer' editing and involves deacylation of mischarged Val-tRNA(Ile). The sequence is that of Isoleucine--tRNA ligase from Shewanella oneidensis (strain ATCC 700550 / JCM 31522 / CIP 106686 / LMG 19005 / NCIMB 14063 / MR-1).